Reading from the N-terminus, the 356-residue chain is DNA polymerase IV (356 aa).

The region spanning 6–187 (IIHIDMDYFF…LDIGDFPGVG (182 aa)) is the UmuC domain. Mg(2+) is bound by residues D10 and D105. E106 is a catalytic residue.

Belongs to the DNA polymerase type-Y family. In terms of assembly, monomer. The cofactor is Mg(2+).

It is found in the cytoplasm. The catalysed reaction is DNA(n) + a 2'-deoxyribonucleoside 5'-triphosphate = DNA(n+1) + diphosphate. Poorly processive, error-prone DNA polymerase involved in untargeted mutagenesis. Copies undamaged DNA at stalled replication forks, which arise in vivo from mismatched or misaligned primer ends. These misaligned primers can be extended by PolIV. Exhibits no 3'-5' exonuclease (proofreading) activity. May be involved in translesional synthesis, in conjunction with the beta clamp from PolIII. The sequence is that of DNA polymerase IV from Staphylococcus aureus (strain JH1).